The primary structure comprises 174 residues: Large ribosomal subunit protein bL12cz (174 aa).

Residues 1–45 (MASTTFSSAFSILSLPSSSPSPPPSPPRTLPVANRRRRAAAVAST) constitute a chloroplast transit peptide. The tract at residues 1–46 (MASTTFSSAFSILSLPSSSPSPPPSPPRTLPVANRRRRAAAVASTA) is disordered. The span at 7–18 (SSAFSILSLPSS) shows a compositional bias: low complexity. A compositionally biased stretch (pro residues) spans 19–29 (SPSPPPSPPRT).

This sequence belongs to the bacterial ribosomal protein bL12 family.

The protein localises to the plastid. Its subcellular location is the chloroplast. In Secale cereale (Rye), this protein is Large ribosomal subunit protein bL12cz (RPL12-1).